A 431-amino-acid chain; its full sequence is Gamma-glutamyl phosphate reductase (431 aa).

The protein belongs to the gamma-glutamyl phosphate reductase family.

It localises to the cytoplasm. The catalysed reaction is L-glutamate 5-semialdehyde + phosphate + NADP(+) = L-glutamyl 5-phosphate + NADPH + H(+). The protein operates within amino-acid biosynthesis; L-proline biosynthesis; L-glutamate 5-semialdehyde from L-glutamate: step 2/2. In terms of biological role, catalyzes the NADPH-dependent reduction of L-glutamate 5-phosphate into L-glutamate 5-semialdehyde and phosphate. The product spontaneously undergoes cyclization to form 1-pyrroline-5-carboxylate. The protein is Gamma-glutamyl phosphate reductase of Bifidobacterium longum subsp. infantis (strain ATCC 15697 / DSM 20088 / JCM 1222 / NCTC 11817 / S12).